We begin with the raw amino-acid sequence, 474 residues long: 3-isopropylmalate dehydratase large subunit (474 aa).

Residues Cys355, Cys415, and Cys418 each coordinate [4Fe-4S] cluster.

This sequence belongs to the aconitase/IPM isomerase family. LeuC type 1 subfamily. As to quaternary structure, heterodimer of LeuC and LeuD. It depends on [4Fe-4S] cluster as a cofactor.

The enzyme catalyses (2R,3S)-3-isopropylmalate = (2S)-2-isopropylmalate. The protein operates within amino-acid biosynthesis; L-leucine biosynthesis; L-leucine from 3-methyl-2-oxobutanoate: step 2/4. Catalyzes the isomerization between 2-isopropylmalate and 3-isopropylmalate, via the formation of 2-isopropylmaleate. This Shewanella sp. (strain W3-18-1) protein is 3-isopropylmalate dehydratase large subunit.